Reading from the N-terminus, the 296-residue chain is Elongation factor Ts (296 aa).

Residues 79 to 82 (TDFV) form an involved in Mg(2+) ion dislocation from EF-Tu region.

This sequence belongs to the EF-Ts family.

Its subcellular location is the cytoplasm. In terms of biological role, associates with the EF-Tu.GDP complex and induces the exchange of GDP to GTP. It remains bound to the aminoacyl-tRNA.EF-Tu.GTP complex up to the GTP hydrolysis stage on the ribosome. The protein is Elongation factor Ts (tsf) of Spiroplasma citri.